A 100-amino-acid polypeptide reads, in one-letter code: Urease subunit gamma (100 aa).

The protein belongs to the urease gamma subunit family. In terms of assembly, probable heterotrimer of UreA (gamma), UreB (beta) and UreC (alpha) subunits. Three heterotrimers associate to form the active enzyme. The trimeric urease interacts with an accessory complex composed of UreD, UreF and UreG, which is required for the assembly of the nickel containing metallocenter of UreC. The UreE protein may also play a direct role in nickel transfer to the urease apoprotein.

It is found in the cytoplasm. It catalyses the reaction urea + 2 H2O + H(+) = hydrogencarbonate + 2 NH4(+). Its pathway is nitrogen metabolism; urea degradation; CO(2) and NH(3) from urea (urease route): step 1/1. The protein is Urease subunit gamma of Proteus mirabilis (strain HI4320).